A 729-amino-acid polypeptide reads, in one-letter code: Phosphoribosylformylglycinamidine synthase subunit PurL (729 aa).

Residue histidine 54 is part of the active site. Tyrosine 57 and lysine 96 together coordinate ATP. Glutamate 98 is a Mg(2+) binding site. Substrate contacts are provided by residues 99–102 (SHNH) and arginine 121. Histidine 100 functions as the Proton acceptor in the catalytic mechanism. Aspartate 122 contributes to the Mg(2+) binding site. Position 245 (glutamine 245) interacts with substrate. Aspartate 273 provides a ligand contact to Mg(2+). Residue 317–319 (ETQ) participates in substrate binding. Residues aspartate 495 and glycine 532 each coordinate ATP. Asparagine 533 provides a ligand contact to Mg(2+). Serine 535 serves as a coordination point for substrate.

It belongs to the FGAMS family. As to quaternary structure, monomer. Part of the FGAM synthase complex composed of 1 PurL, 1 PurQ and 2 PurS subunits.

Its subcellular location is the cytoplasm. The catalysed reaction is N(2)-formyl-N(1)-(5-phospho-beta-D-ribosyl)glycinamide + L-glutamine + ATP + H2O = 2-formamido-N(1)-(5-O-phospho-beta-D-ribosyl)acetamidine + L-glutamate + ADP + phosphate + H(+). It functions in the pathway purine metabolism; IMP biosynthesis via de novo pathway; 5-amino-1-(5-phospho-D-ribosyl)imidazole from N(2)-formyl-N(1)-(5-phospho-D-ribosyl)glycinamide: step 1/2. Functionally, part of the phosphoribosylformylglycinamidine synthase complex involved in the purines biosynthetic pathway. Catalyzes the ATP-dependent conversion of formylglycinamide ribonucleotide (FGAR) and glutamine to yield formylglycinamidine ribonucleotide (FGAM) and glutamate. The FGAM synthase complex is composed of three subunits. PurQ produces an ammonia molecule by converting glutamine to glutamate. PurL transfers the ammonia molecule to FGAR to form FGAM in an ATP-dependent manner. PurS interacts with PurQ and PurL and is thought to assist in the transfer of the ammonia molecule from PurQ to PurL. The sequence is that of Phosphoribosylformylglycinamidine synthase subunit PurL from Staphylococcus aureus (strain Mu3 / ATCC 700698).